The chain runs to 206 residues: Guanylate kinase (206 aa).

A Guanylate kinase-like domain is found at 7–185 (GLLIVISGPS…AVEKIRAIII (179 aa)). Position 14–21 (14–21 (GPSGAGKG)) interacts with ATP.

This sequence belongs to the guanylate kinase family.

It is found in the cytoplasm. The catalysed reaction is GMP + ATP = GDP + ADP. Essential for recycling GMP and indirectly, cGMP. The sequence is that of Guanylate kinase from Caldanaerobacter subterraneus subsp. tengcongensis (strain DSM 15242 / JCM 11007 / NBRC 100824 / MB4) (Thermoanaerobacter tengcongensis).